The chain runs to 302 residues: tRNA pseudouridine synthase B (302 aa).

Asp-40 (nucleophile) is an active-site residue.

This sequence belongs to the pseudouridine synthase TruB family. Type 1 subfamily.

It catalyses the reaction uridine(55) in tRNA = pseudouridine(55) in tRNA. Its function is as follows. Responsible for synthesis of pseudouridine from uracil-55 in the psi GC loop of transfer RNAs. This is tRNA pseudouridine synthase B from Shouchella clausii (strain KSM-K16) (Alkalihalobacillus clausii).